We begin with the raw amino-acid sequence, 808 residues long: Phospholipase D alpha 1 (808 aa).

Positions 1 to 30 (MAQISLHGTLHVTIYEVDKLHSGGGPHFFR) are excised as a propeptide. One can recognise a C2 domain in the interval 1-125 (MAQISLHGTL…LDGEEIDRWV (125 aa)). A Ca(2+)-binding site is contributed by D186. Residues 326–364 (TMFTHHQKIVVVDSAMPNGDSQRRRIVSFVGGLDLCDGR) enclose the PLD phosphodiesterase 1 domain. Catalysis depends on residues H331, K333, and D338. H331 serves as a coordination point for a 1,2-diacyl-sn-glycero-3-phosphate. Ca(2+) contacts are provided by H370 and H404. A 1,2-diacyl-sn-glycero-3-phosphate is bound by residues Q520 and H659. Residues 654 to 681 (FMIYVHTKMMIVDDEYIIIGSANINQRS) enclose the PLD phosphodiesterase 2 domain. Active-site residues include H659, K661, and D666. E720 is a Ca(2+) binding site.

It belongs to the phospholipase D family. C2-PLD subfamily. Requires Ca(2+) as cofactor. Expression is higher in radicle than in endosperm.

It localises to the cytoplasm. The protein localises to the membrane. The protein resides in the vacuole. Its subcellular location is the endoplasmic reticulum. It is found in the plastid. It localises to the cell membrane. The catalysed reaction is a 1,2-diacyl-sn-glycero-3-phosphocholine + H2O = a 1,2-diacyl-sn-glycero-3-phosphate + choline + H(+). Functionally, hydrolyzes glycerol-phospholipids at the terminal phosphodiesteric bond. Plays an important role in various cellular processes, including phytohormone action, vesicular trafficking, secretion, cytoskeletal arrangement, meiosis, tumor promotion, pathogenesis, membrane deterioration and senescence. This is Phospholipase D alpha 1 (PLD1) from Ricinus communis (Castor bean).